Here is a 741-residue protein sequence, read N- to C-terminus: MDIINCSDNDLDLIGKSLALSHDEMLLIKKYFTEIKRNPSDVELQAIAQSWSEHSCYKSSKFYLKKYLSNLRNERTILAMEDDAGVVKFNDDYVYVVKMESHNHPSAVEPYGGAATGVGGIIRDVLCMGAQPVALVDSLYFGDPDNKSGFLSERFIINGVVSGIRDYGNRLGIPNVAGSIYFHEGYNTSPIVNAGCIGISRKDKIVRSRVQKARDILILCGGRTGRDGIHGVNFASRVLDLKNGENRNAVQLGNPIVEEPLIHAILELNDLGLITGMKDLGGGGLSSAVTEMLYAGNLGGTINLDSVLLKDDNMLPWEIWISESQERMLISSDERNLPQIKDVLDKWNIEFSVIGRAEEKKNLEIYYKNEKVFDLPLEFISKTPVYQRPYKKPRNRCKSEPFRDDDINKSIISLISSINVCSRAPVIRQYDHTVRGATIVRPLTGLPNNETHSDAAVIKPVDDSFAGIAVTSGSKPMLCTIDPYGGALESLIEAYKNIIVTGAEPDAIVDSLNFGNPENEETMYSFVETLKAIRDFTLKFKLQLVSGNVSFYNKNVSDIMPTPNIMMTGIIDDVRKAITTEFKNKNSLIYLIGSINGSLAGTVYSKLKDIKCYDYHNSNINDLCNVYNIIKENKEKILAAHDVSDGGIIAALIEMSFGKNIGFNVNLKDIKMNLENKLFSEHGTAIVIEVPLESEIVFNNLGIKLGYTCDDITVMDGENMVFNARISELKNLWDSGLGKYL.

H54 is a catalytic residue. ATP-binding residues include Y57 and K98. E100 lines the Mg(2+) pocket. Substrate is bound by residues 101-104 (SHNH) and R123. Residue H102 is the Proton acceptor of the active site. Mg(2+) is bound at residue D124. A substrate-binding site is contributed by Q251. D279 provides a ligand contact to Mg(2+). Position 323–325 (323–325 (ESQ)) interacts with substrate. 2 residues coordinate ATP: D510 and G547. N548 provides a ligand contact to Mg(2+). S550 lines the substrate pocket.

The protein belongs to the FGAMS family. As to quaternary structure, monomer. Part of the FGAM synthase complex composed of 1 PurL, 1 PurQ and 2 PurS subunits.

The protein resides in the cytoplasm. The enzyme catalyses N(2)-formyl-N(1)-(5-phospho-beta-D-ribosyl)glycinamide + L-glutamine + ATP + H2O = 2-formamido-N(1)-(5-O-phospho-beta-D-ribosyl)acetamidine + L-glutamate + ADP + phosphate + H(+). It functions in the pathway purine metabolism; IMP biosynthesis via de novo pathway; 5-amino-1-(5-phospho-D-ribosyl)imidazole from N(2)-formyl-N(1)-(5-phospho-D-ribosyl)glycinamide: step 1/2. Its function is as follows. Part of the phosphoribosylformylglycinamidine synthase complex involved in the purines biosynthetic pathway. Catalyzes the ATP-dependent conversion of formylglycinamide ribonucleotide (FGAR) and glutamine to yield formylglycinamidine ribonucleotide (FGAM) and glutamate. The FGAM synthase complex is composed of three subunits. PurQ produces an ammonia molecule by converting glutamine to glutamate. PurL transfers the ammonia molecule to FGAR to form FGAM in an ATP-dependent manner. PurS interacts with PurQ and PurL and is thought to assist in the transfer of the ammonia molecule from PurQ to PurL. The protein is Phosphoribosylformylglycinamidine synthase subunit PurL of Picrophilus torridus (strain ATCC 700027 / DSM 9790 / JCM 10055 / NBRC 100828 / KAW 2/3).